Here is a 960-residue protein sequence, read N- to C-terminus: Phosphoenolpyruvate carboxylase 3 (960 aa).

A Phosphoserine modification is found at Ser-8. Catalysis depends on residues His-167 and Lys-597.

It belongs to the PEPCase type 1 family. As to quaternary structure, homotetramer. Mg(2+) serves as cofactor.

The protein resides in the cytoplasm. It carries out the reaction oxaloacetate + phosphate = phosphoenolpyruvate + hydrogencarbonate. The protein operates within photosynthesis; C4 acid pathway. Its activity is regulated as follows. By light-reversible phosphorylation. In terms of biological role, through the carboxylation of phosphoenolpyruvate (PEP) it forms oxaloacetate, a four-carbon dicarboxylic acid source for the tricarboxylic acid cycle. The chain is Phosphoenolpyruvate carboxylase 3 from Sorghum bicolor (Sorghum).